The chain runs to 103 residues: Large ribosomal subunit protein uL24 (103 aa).

It belongs to the universal ribosomal protein uL24 family. In terms of assembly, part of the 50S ribosomal subunit.

In terms of biological role, one of two assembly initiator proteins, it binds directly to the 5'-end of the 23S rRNA, where it nucleates assembly of the 50S subunit. Its function is as follows. One of the proteins that surrounds the polypeptide exit tunnel on the outside of the subunit. In Brucella abortus (strain S19), this protein is Large ribosomal subunit protein uL24.